Consider the following 578-residue polypeptide: GRAM domain-containing protein 4 (578 aa).

Residues 83 to 135 adopt a coiled-coil conformation; it reads HLEIALLEKHFLQEELRKLREETNIDTLKQELEKERQRRTELEQKITDIAKTR. The tract at residues 132 to 157 is disordered; it reads AKTRTDESATQQLSKGPSQTNGADKQ. Residues 139–154 show a composition bias toward polar residues; sequence SATQQLSKGPSQTNGA. 3 helical membrane passes run 236–256, 334–354, and 356–376; these read IAFI…MFLF, MTQK…FFHY, and TIGL…DFIF. The GRAM domain maps to 446-524; it reads SSFHEIFSLL…TDITDIQKYK (79 aa).

The protein resides in the mitochondrion membrane. The protein localises to the endoplasmic reticulum membrane. Its function is as follows. Plays a role as a mediator of e2f1-induced apoptosis in the absence of p53/TP53. The sequence is that of GRAM domain-containing protein 4 (gramd4) from Xenopus laevis (African clawed frog).